Reading from the N-terminus, the 359-residue chain is UDP-3-O-acylglucosamine N-acyltransferase (359 aa).

The active-site Proton acceptor is histidine 253.

This sequence belongs to the transferase hexapeptide repeat family. LpxD subfamily. Homotrimer.

It carries out the reaction a UDP-3-O-[(3R)-3-hydroxyacyl]-alpha-D-glucosamine + a (3R)-hydroxyacyl-[ACP] = a UDP-2-N,3-O-bis[(3R)-3-hydroxyacyl]-alpha-D-glucosamine + holo-[ACP] + H(+). It functions in the pathway bacterial outer membrane biogenesis; LPS lipid A biosynthesis. Its function is as follows. Catalyzes the N-acylation of UDP-3-O-acylglucosamine using 3-hydroxyacyl-ACP as the acyl donor. Is involved in the biosynthesis of lipid A, a phosphorylated glycolipid that anchors the lipopolysaccharide to the outer membrane of the cell. This Burkholderia cenocepacia (strain ATCC BAA-245 / DSM 16553 / LMG 16656 / NCTC 13227 / J2315 / CF5610) (Burkholderia cepacia (strain J2315)) protein is UDP-3-O-acylglucosamine N-acyltransferase.